The chain runs to 590 residues: Probable indole-3-acetic acid-amido synthetase GH3.1 (590 aa).

It belongs to the IAA-amido conjugating enzyme family.

Functionally, catalyzes the synthesis of indole-3-acetic acid (IAA)-amino acid conjugates, providing a mechanism for the plant to cope with the presence of excess auxin. The sequence is that of Probable indole-3-acetic acid-amido synthetase GH3.1 (GH3.1) from Arabidopsis thaliana (Mouse-ear cress).